The primary structure comprises 370 residues: Pyruvate dehydrogenase E1 component subunit alpha (370 aa).

As to quaternary structure, heterodimer of an alpha and a beta chain. The cofactor is thiamine diphosphate.

It catalyses the reaction N(6)-[(R)-lipoyl]-L-lysyl-[protein] + pyruvate + H(+) = N(6)-[(R)-S(8)-acetyldihydrolipoyl]-L-lysyl-[protein] + CO2. The pyruvate dehydrogenase complex catalyzes the overall conversion of pyruvate to acetyl-CoA and CO(2). It contains multiple copies of three enzymatic components: pyruvate dehydrogenase (E1), dihydrolipoamide acetyltransferase (E2) and lipoamide dehydrogenase (E3). This is Pyruvate dehydrogenase E1 component subunit alpha (pdhA) from Staphylococcus aureus (strain MRSA252).